A 468-amino-acid chain; its full sequence is Putrescine aminotransferase (468 aa).

Residues 150-151 (GT) and Gln274 contribute to the pyridoxal 5'-phosphate site. Lys300 bears the N6-(pyridoxal phosphate)lysine mark. Thr332 contributes to the pyridoxal 5'-phosphate binding site.

Belongs to the class-III pyridoxal-phosphate-dependent aminotransferase family. Putrescine aminotransferase subfamily. Pyridoxal 5'-phosphate is required as a cofactor.

It catalyses the reaction an alkane-alpha,omega-diamine + 2-oxoglutarate = an omega-aminoaldehyde + L-glutamate. The enzyme catalyses putrescine + 2-oxoglutarate = 1-pyrroline + L-glutamate + H2O. The catalysed reaction is cadaverine + 2-oxoglutarate = 5-aminopentanal + L-glutamate. It functions in the pathway amine and polyamine degradation; putrescine degradation; 4-aminobutanal from putrescine (transaminase route): step 1/1. Functionally, catalyzes the aminotransferase reaction from putrescine to 2-oxoglutarate, leading to glutamate and 4-aminobutanal, which spontaneously cyclizes to form 1-pyrroline. This is the first step in one of two pathways for putrescine degradation, where putrescine is converted into 4-aminobutanoate (gamma-aminobutyrate or GABA) via 4-aminobutanal. Also functions as a cadaverine transaminase in a a L-lysine degradation pathway to succinate that proceeds via cadaverine, glutarate and L-2-hydroxyglutarate. The chain is Putrescine aminotransferase from Pectobacterium atrosepticum (strain SCRI 1043 / ATCC BAA-672) (Erwinia carotovora subsp. atroseptica).